The sequence spans 488 residues: UDP-glycosyltransferase 73B1 (488 aa).

UDP-alpha-D-glucose-binding positions include Thr297, 356-358, 373-381, and 395-398; these read APQ, HCGWNSLLE, and GAEQ.

Belongs to the UDP-glycosyltransferase family.

Its function is as follows. Possesses low quercetin 3-O-glucosyltransferase and 7-O-glucosyltransferase activities in vitro. The polypeptide is UDP-glycosyltransferase 73B1 (UGT73B1) (Arabidopsis thaliana (Mouse-ear cress)).